The chain runs to 196 residues: UPF0215 protein MM_1007 (196 aa).

Belongs to the UPF0215 family.

This chain is UPF0215 protein MM_1007, found in Methanosarcina mazei (strain ATCC BAA-159 / DSM 3647 / Goe1 / Go1 / JCM 11833 / OCM 88) (Methanosarcina frisia).